A 142-amino-acid chain; its full sequence is Hemoglobin subunit alpha (142 aa).

The 141-residue stretch at 2–142 (VLSDANKQEI…LVHQLSSKYR (141 aa)) folds into the Globin domain. Histidine 60 lines the O2 pocket. Residue histidine 89 coordinates heme b.

This sequence belongs to the globin family. As to quaternary structure, heterotetramer of two alpha chains and two beta chains. Red blood cells.

In terms of biological role, involved in oxygen transport from gills to the various peripheral tissues. In Bathyraja eatonii (Eaton's skate), this protein is Hemoglobin subunit alpha (HBA).